The following is a 232-amino-acid chain: Large ribosomal subunit protein uL1 (232 aa).

Belongs to the universal ribosomal protein uL1 family. Part of the 50S ribosomal subunit.

Functionally, binds directly to 23S rRNA. The L1 stalk is quite mobile in the ribosome, and is involved in E site tRNA release. Its function is as follows. Protein L1 is also a translational repressor protein, it controls the translation of the L11 operon by binding to its mRNA. The chain is Large ribosomal subunit protein uL1 from Ruegeria sp. (strain TM1040) (Silicibacter sp.).